Reading from the N-terminus, the 248-residue chain is tRNA (guanine-N(1)-)-methyltransferase (248 aa).

S-adenosyl-L-methionine-binding positions include glycine 116 and 136–141; that span reads VGDYVL.

This sequence belongs to the RNA methyltransferase TrmD family. In terms of assembly, homodimer.

The protein localises to the cytoplasm. The catalysed reaction is guanosine(37) in tRNA + S-adenosyl-L-methionine = N(1)-methylguanosine(37) in tRNA + S-adenosyl-L-homocysteine + H(+). In terms of biological role, specifically methylates guanosine-37 in various tRNAs. This is tRNA (guanine-N(1)-)-methyltransferase from Psychromonas ingrahamii (strain DSM 17664 / CCUG 51855 / 37).